Reading from the N-terminus, the 559-residue chain is Potassium-transporting ATPase potassium-binding subunit (559 aa).

Transmembrane regions (helical) follow at residues 6–26 (FLLI…LGNV), 63–83 (LLAI…MLML), 131–151 (VGLT…IFAL), 173–193 (ITLW…IQQG), 253–273 (FVQM…FGDV), 283–303 (LLWA…WAEW), 327–347 (FGIL…CGAV), 356–376 (ALGG…FGGV), 379–399 (GLYG…LMIG), 416–436 (LTAL…ALAL), 484–504 (LLAF…MAIA), and 524–544 (GALF…LTFI).

The protein belongs to the KdpA family. The system is composed of three essential subunits: KdpA, KdpB and KdpC.

The protein localises to the cell inner membrane. Part of the high-affinity ATP-driven potassium transport (or Kdp) system, which catalyzes the hydrolysis of ATP coupled with the electrogenic transport of potassium into the cytoplasm. This subunit binds the periplasmic potassium ions and delivers the ions to the membrane domain of KdpB through an intramembrane tunnel. The polypeptide is Potassium-transporting ATPase potassium-binding subunit (Enterobacter sp. (strain 638)).